Consider the following 203-residue polypeptide: Protein GrpE (203 aa).

Positions 1–20 are enriched in polar residues; sequence MSDNGDNNTKSPQHNNPQPN. The interval 1–46 is disordered; the sequence is MSDNGDNNTKSPQHNNPQPNEKSDGKVQPGQPQVNPQRKFTAGINK.

This sequence belongs to the GrpE family. As to quaternary structure, homodimer.

The protein localises to the cytoplasm. In terms of biological role, participates actively in the response to hyperosmotic and heat shock by preventing the aggregation of stress-denatured proteins, in association with DnaK and GrpE. It is the nucleotide exchange factor for DnaK and may function as a thermosensor. Unfolded proteins bind initially to DnaJ; upon interaction with the DnaJ-bound protein, DnaK hydrolyzes its bound ATP, resulting in the formation of a stable complex. GrpE releases ADP from DnaK; ATP binding to DnaK triggers the release of the substrate protein, thus completing the reaction cycle. Several rounds of ATP-dependent interactions between DnaJ, DnaK and GrpE are required for fully efficient folding. The protein is Protein GrpE of Ehrlichia chaffeensis (strain ATCC CRL-10679 / Arkansas).